The primary structure comprises 535 residues: Potassium channel subfamily K member 10 (535 aa).

Residues 1-68 (MYFSYIGYFF…GLQTVMKWKT (68 aa)) lie on the Cytoplasmic side of the membrane. Residues 69-89 (VVAIFVVVVVYLVTGGLVFRA) traverse the membrane as a helical segment. Positions 151 to 177 (LGSAFFFAGTVITTIGYGNIAPSTEGG) form an intramembrane region, pore-forming. 4 residues coordinate K(+): Thr164, Ile165, Gly166, and Tyr167. A selectivity filter 1 region spans residues 164-169 (TIGYGN). The helical transmembrane segment at 179–199 (IFCILYAIFGIPLFGFLLAGI) threads the bilayer. Topologically, residues 200–230 (GDQLGTIFGKSIARVEKVFRKKQVSQTKIRV) are cytoplasmic. The chain crosses the membrane as a helical span at residues 231–251 (ISTILFILAGCIVFVTIPAVI). An intramembrane region (pore-forming) is located at residues 260–291 (ALESIYFVVVTLTTVGFGDFVAGGNAGINYRE). K(+) contacts are provided by Thr273, Val274, Gly275, and Phe276. Residues 273–278 (TVGFGD) are selectivity filter 2. The helical transmembrane segment at 296-316 (LVWFWILVGLAYFAAVLSMIG) threads the bilayer. The Cytoplasmic segment spans residues 317–535 (DWLRVLSKKT…ENNSLLEDRN (219 aa)). Disordered stretches follow at residues 410–438 (QESINNRPNNLRLKGPEQLTKHGQGASED) and 510–535 (EMENGMVPTDTKDQGLENNSLLEDRN). A compositionally biased stretch (polar residues) spans 525-535 (LENNSLLEDRN).

Homodimer; disulfide-linked. Forms heterodimers with other 2-pore domain K(+) channel subunits, such as KCNK2, KCNK4 and KCNK18. As to expression, detected in dorsal root ganglia (DRG) neurons (at protein level).

It localises to the cell membrane. It carries out the reaction K(+)(in) = K(+)(out). The catalysed reaction is Rb(+)(in) = Rb(+)(out). The enzyme catalyses Cs(+)(in) = Cs(+)(out). Its activity is regulated as follows. Activated by stimuli such as mechanical stretch, acidic pH and polyunsaturated free fatty acids. Activated by a dihydroacridine analog, ML67-33. Inhibited by polycationic dye ruthenium red. Selectively activated by T2A3 (2-[(4-chloro-3-methylphenyl)amino] benzoic acid). In terms of biological role, k(+) channel that conducts voltage-dependent outward rectifying currents upon membrane depolarization. Voltage sensing is coupled to K(+) electrochemical gradient in an 'ion flux gating' mode where outward but not inward ion flow opens the gate. Converts to voltage-independent 'leak' conductance mode upon stimulation by various stimuli including mechanical membrane stretch, acidic pH, heat and lipids. Homo- and heterodimerizes to form functional channels with distinct regulatory and gating properties. In trigeminal ganglia sensory neurons, the heterodimer of KCNK10/TREK-2 and KCNK18/TRESK inhibits neuronal firing and neurogenic inflammation by stabilizing the resting membrane potential at K(+) equilibrium potential as well as by regulating the threshold of action potentials and the spike frequency. Permeable to other monovalent ions such as Rb(+) and Cs(+). This Mus musculus (Mouse) protein is Potassium channel subfamily K member 10.